The following is a 451-amino-acid chain: MADVSTSMRLKLPVVCFILEIILIILFGALVQYDYETDAKEWHNQSHNDYENDFYFRYPSFQDVHVMIFIGFGFLMTFLQKYGFGSVGFNFLIAAFSLQWATLMQGFFHGMHGGKIHVGVESMINADFCTGSVLISFGAVLGKTSPIQLLTMAMFEVTLFAVNEFILLSLLGTRDAGGSMTIHTFGAYFGLMVTRILYRPHLDKSKHRNSSVYHSDLFAMIGTIYLWMFWPSFNSAITAHGDDQHRTALNTYYSLAACTLATYGMSAVTSHDGKLDMVHIQNAALAGGVAVGTAGEMMLTPFGSMIVGFLAGIISVLGFKFLSPILESKLKIQDTCGVHNLHGMPGVLGAIVGAVTAALATMDVYGKGMEDVFPAVADGSIDASKQGGVQALSLAITLGIALLGGLIVVFGTPPDTLCFEDGVYWEVPESEAPHEAQLTTVRTEETEKLSS.

Topologically, residues 1–11 are cytoplasmic; it reads MADVSTSMRLK. A helical membrane pass occupies residues 12-32; it reads LPVVCFILEIILIILFGALVQ. Over 33 to 63 the chain is Extracellular; sequence YDYETDAKEWHNQSHNDYENDFYFRYPSFQD. Asn44 carries N-linked (GlcNAc...) asparagine glycosylation. A helical transmembrane segment spans residues 64-84; it reads VHVMIFIGFGFLMTFLQKYGF. Topologically, residues 85–87 are cytoplasmic; that stretch reads GSV. A helical transmembrane segment spans residues 88 to 108; it reads GFNFLIAAFSLQWATLMQGFF. Over 109–121 the chain is Extracellular; that stretch reads HGMHGGKIHVGVE. The helical transmembrane segment at 122–142 threads the bilayer; sequence SMINADFCTGSVLISFGAVLG. Residues 143–151 lie on the Cytoplasmic side of the membrane; that stretch reads KTSPIQLLT. A helical transmembrane segment spans residues 152–172; it reads MAMFEVTLFAVNEFILLSLLG. The Extracellular portion of the chain corresponds to 173 to 176; that stretch reads TRDA. Residues 177 to 197 traverse the membrane as a helical segment; the sequence is GGSMTIHTFGAYFGLMVTRIL. At 198–216 the chain is on the cytoplasmic side; the sequence is YRPHLDKSKHRNSSVYHSD. The helical transmembrane segment at 217–237 threads the bilayer; the sequence is LFAMIGTIYLWMFWPSFNSAI. Over 238-247 the chain is Extracellular; the sequence is TAHGDDQHRT. A helical transmembrane segment spans residues 248-270; the sequence is ALNTYYSLAACTLATYGMSAVTS. The Cytoplasmic portion of the chain corresponds to 271–274; sequence HDGK. Residues 275–295 traverse the membrane as a helical segment; sequence LDMVHIQNAALAGGVAVGTAG. The Extracellular segment spans residues 296 to 298; that stretch reads EMM. Residues 299–319 form a helical membrane-spanning segment; it reads LTPFGSMIVGFLAGIISVLGF. Residues 320–340 lie on the Cytoplasmic side of the membrane; it reads KFLSPILESKLKIQDTCGVHN. The helical transmembrane segment at 341-361 threads the bilayer; sequence LHGMPGVLGAIVGAVTAALAT. The Extracellular portion of the chain corresponds to 362–390; sequence MDVYGKGMEDVFPAVADGSIDASKQGGVQ. A helical transmembrane segment spans residues 391–411; sequence ALSLAITLGIALLGGLIVVFG. The Cytoplasmic segment spans residues 412 to 451; that stretch reads TPPDTLCFEDGVYWEVPESEAPHEAQLTTVRTEETEKLSS.

The protein belongs to the ammonium transporter (TC 2.A.49) family. Rh subfamily.

The protein resides in the basolateral cell membrane. It localises to the cytoplasmic vesicle membrane. Functions as an ammonia transporter. May play a role in the elimination of ammonia in the gill. In Tetraodon nigroviridis (Spotted green pufferfish), this protein is Ammonium transporter Rh type B (rhbg).